The following is a 519-amino-acid chain: Histidine--tRNA ligase (519 aa).

Belongs to the class-II aminoacyl-tRNA synthetase family. As to quaternary structure, homodimer.

It localises to the cytoplasm. The enzyme catalyses tRNA(His) + L-histidine + ATP = L-histidyl-tRNA(His) + AMP + diphosphate + H(+). This Rhodopseudomonas palustris (strain BisB18) protein is Histidine--tRNA ligase.